The sequence spans 262 residues: Ribosome biogenesis GTPase A (262 aa).

One can recognise a CP-type G domain in the interval Lys-12–Lys-157. GTP-binding positions include Asn-54–Asp-57, Asn-109–Thr-114, and Gly-153.

Belongs to the TRAFAC class YlqF/YawG GTPase family. MTG1 subfamily.

The protein resides in the cytoplasm. Required for a late step of 50S ribosomal subunit assembly. Has GTPase activity. Binds to the 23S rRNA. This Thermotoga maritima (strain ATCC 43589 / DSM 3109 / JCM 10099 / NBRC 100826 / MSB8) protein is Ribosome biogenesis GTPase A.